We begin with the raw amino-acid sequence, 254 residues long: Type III pantothenate kinase (254 aa).

An ATP-binding site is contributed by 22–29; it reads VLGNTHVR. Residues Y89 and 93-96 contribute to the substrate site; that span reads GLDR. D95 serves as the catalytic Proton acceptor. Residue D115 participates in K(+) binding. T118 provides a ligand contact to ATP. Residue T173 coordinates substrate.

It belongs to the type III pantothenate kinase family. In terms of assembly, homodimer. Requires NH4(+) as cofactor. It depends on K(+) as a cofactor.

It localises to the cytoplasm. It carries out the reaction (R)-pantothenate + ATP = (R)-4'-phosphopantothenate + ADP + H(+). The protein operates within cofactor biosynthesis; coenzyme A biosynthesis; CoA from (R)-pantothenate: step 1/5. Its function is as follows. Catalyzes the phosphorylation of pantothenate (Pan), the first step in CoA biosynthesis. The polypeptide is Type III pantothenate kinase (Synechococcus sp. (strain JA-2-3B'a(2-13)) (Cyanobacteria bacterium Yellowstone B-Prime)).